We begin with the raw amino-acid sequence, 253 residues long: MITKRIIPCLDVDMGRVVKGVNFVNLKDVGDPVEIAEFYNKEGADEIVFLDISATHEGRATMIDVVRKTAEKLFIPLTVGGGIKNINDFKDILRAGADKISVNSSAIRNPKLIKKAAECFGSQCVVVAIDGKKRKDKDGWNVFINGGRIDTGLDAIEWARKVEKLGAGEILLTSMDADGTKEGYDLELTNEVSKAVNIPVIASGGCGKLKHFGEIFEKSSADAALAASLFHFKELSIKEVKNYLKEEGFSVRL.

Residues Asp11 and Asp130 contribute to the active site.

This sequence belongs to the HisA/HisF family. In terms of assembly, heterodimer of HisH and HisF.

It is found in the cytoplasm. It catalyses the reaction 5-[(5-phospho-1-deoxy-D-ribulos-1-ylimino)methylamino]-1-(5-phospho-beta-D-ribosyl)imidazole-4-carboxamide + L-glutamine = D-erythro-1-(imidazol-4-yl)glycerol 3-phosphate + 5-amino-1-(5-phospho-beta-D-ribosyl)imidazole-4-carboxamide + L-glutamate + H(+). It functions in the pathway amino-acid biosynthesis; L-histidine biosynthesis; L-histidine from 5-phospho-alpha-D-ribose 1-diphosphate: step 5/9. Functionally, IGPS catalyzes the conversion of PRFAR and glutamine to IGP, AICAR and glutamate. The HisF subunit catalyzes the cyclization activity that produces IGP and AICAR from PRFAR using the ammonia provided by the HisH subunit. The sequence is that of Imidazole glycerol phosphate synthase subunit HisF from Clostridium botulinum (strain Okra / Type B1).